Reading from the N-terminus, the 636-residue chain is Chaperone protein DnaK (636 aa).

At T203 the chain carries Phosphothreonine; by autocatalysis. Positions 602–636 are disordered; the sequence is VYGKQQEGAPAQEEPSAEGKKADDEGTVEGEFREV. A compositionally biased stretch (basic and acidic residues) spans 618-636; that stretch reads AEGKKADDEGTVEGEFREV.

It belongs to the heat shock protein 70 family.

Acts as a chaperone. This Dehalococcoides mccartyi (strain ATCC BAA-2100 / JCM 16839 / KCTC 5957 / BAV1) protein is Chaperone protein DnaK.